A 1295-amino-acid chain; its full sequence is DNA-directed RNA polymerase subunit beta' (1295 aa).

Zn(2+)-binding residues include Cys60, Cys62, Cys75, and Cys78. 3 residues coordinate Mg(2+): Asp516, Asp518, and Asp520. Residues Cys841, Cys914, Cys921, and Cys924 each contribute to the Zn(2+) site.

The protein belongs to the RNA polymerase beta' chain family. The RNAP catalytic core consists of 2 alpha, 1 beta, 1 beta' and 1 omega subunit. When a sigma factor is associated with the core the holoenzyme is formed, which can initiate transcription. The cofactor is Mg(2+). Zn(2+) serves as cofactor.

The enzyme catalyses RNA(n) + a ribonucleoside 5'-triphosphate = RNA(n+1) + diphosphate. In terms of biological role, DNA-dependent RNA polymerase catalyzes the transcription of DNA into RNA using the four ribonucleoside triphosphates as substrates. The polypeptide is DNA-directed RNA polymerase subunit beta' (Dehalococcoides mccartyi (strain ATCC BAA-2266 / KCTC 15142 / 195) (Dehalococcoides ethenogenes (strain 195))).